A 1063-amino-acid chain; its full sequence is Exportin-1 (1063 aa).

Positions 43–109 (AQSILTTLKE…KKYVVSLIIK (67 aa)) constitute an Importin N-terminal domain. A disordered region spans residues 1034–1063 (AEEQSNKHQMQRNIPGMLNPHELPEDMQDE).

Belongs to the exportin family. In terms of assembly, interacts with Clbn (via its N-terminus). Associates with the nuclear pore complex via interaction with mbo and Nup214. Interacts with target proteins containing NES sequences such as actin and dl. In terms of tissue distribution, high expression observed in the developing embryonic brain, hind gut and posterior spiracles shortly before dorsal closure; and in the ventral nerve cord, midgut and somatic musculature shortly after dorsal closure. Expression increases when the tissue is well developed.

It is found in the nucleus. Its subcellular location is the nucleus membrane. In terms of biological role, receptor for the leucine-rich nuclear export signal (NES). Binds cooperatively to the NES on its target protein and to the small GTPase Ran in its active GTP-bound form. Involved in the export of dl, RpS2 and the pre-40S ribosome from the nucleus to the cytoplasm. Plays an important role in nuclear pore assembly by mediating nucleoporin condensation and biogenesis of annulate lamellae. Required for the function or maintenance of certain tissues such as brain and gut. The sequence is that of Exportin-1 from Drosophila melanogaster (Fruit fly).